The following is a 399-amino-acid chain: Tryptophan synthase beta chain (399 aa).

At Lys91 the chain carries N6-(pyridoxal phosphate)lysine.

It belongs to the TrpB family. As to quaternary structure, tetramer of two alpha and two beta chains. It depends on pyridoxal 5'-phosphate as a cofactor.

It catalyses the reaction (1S,2R)-1-C-(indol-3-yl)glycerol 3-phosphate + L-serine = D-glyceraldehyde 3-phosphate + L-tryptophan + H2O. Its pathway is amino-acid biosynthesis; L-tryptophan biosynthesis; L-tryptophan from chorismate: step 5/5. The beta subunit is responsible for the synthesis of L-tryptophan from indole and L-serine. The polypeptide is Tryptophan synthase beta chain (Shouchella clausii (strain KSM-K16) (Alkalihalobacillus clausii)).